The primary structure comprises 66 residues: Large ribosomal subunit protein bL33c (66 aa).

Belongs to the bacterial ribosomal protein bL33 family.

The protein localises to the plastid. Its subcellular location is the chloroplast. This is Large ribosomal subunit protein bL33c from Cycas taitungensis (Prince sago).